The sequence spans 474 residues: Nitrosuccinate lyase (474 aa).

S295 acts as the Proton acceptor in catalysis. Fumarate-binding residues include K301 and N303. The active-site Proton donor is the R334.

The protein belongs to the class-II fumarase/aspartase family.

The catalysed reaction is 2-nitrobutanedioate = fumarate + nitrite + H(+). In terms of biological role, involved in the biosynthesis of desferrioxamine derivatives which have iron-binding properties and may act as siderophores. Catalyzes the formation of nitrous acid from nitrosuccinic acid (2-nitrobutanedioate) by elimination of its nitro group. In Streptomyces davaonensis (strain DSM 101723 / JCM 4913 / KCC S-0913 / 768), this protein is Nitrosuccinate lyase.